The following is a 194-amino-acid chain: Large ribosomal subunit protein bL9 (194 aa).

It belongs to the bacterial ribosomal protein bL9 family.

Its function is as follows. Binds to the 23S rRNA. The chain is Large ribosomal subunit protein bL9 from Paracoccus denitrificans (strain Pd 1222).